We begin with the raw amino-acid sequence, 122 residues long: Protein FLORAL ORGAN NUMBER2 (122 aa).

The signal sequence occupies residues Met1–Gly25. A disordered region spans residues Gly28–Pro122. The span at Lys54–Arg63 shows a compositional bias: basic residues. The span at Arg64 to Ser77 shows a compositional bias: low complexity. A compositionally biased stretch (basic and acidic residues) spans Arg111 to Pro122.

The protein belongs to the CLV3/ESR signal peptide family.

The protein localises to the secreted. Functionally, probable extracellular signal that regulates meristem maintenance. May function as a putative ligand for a receptor complex including FON1. Regulates the size of the floral meristem and the number of floral organs. The chain is Protein FLORAL ORGAN NUMBER2 (FON2) from Oryza sativa subsp. indica (Rice).